We begin with the raw amino-acid sequence, 293 residues long: 4-hydroxy-tetrahydrodipicolinate synthase (293 aa).

Thr-45 is a binding site for pyruvate. Tyr-133 functions as the Proton donor/acceptor in the catalytic mechanism. Catalysis depends on Lys-161, which acts as the Schiff-base intermediate with substrate. A pyruvate-binding site is contributed by Ile-203.

It belongs to the DapA family. In terms of assembly, homotetramer; dimer of dimers.

It is found in the cytoplasm. It carries out the reaction L-aspartate 4-semialdehyde + pyruvate = (2S,4S)-4-hydroxy-2,3,4,5-tetrahydrodipicolinate + H2O + H(+). Its pathway is amino-acid biosynthesis; L-lysine biosynthesis via DAP pathway; (S)-tetrahydrodipicolinate from L-aspartate: step 3/4. Functionally, catalyzes the condensation of (S)-aspartate-beta-semialdehyde [(S)-ASA] and pyruvate to 4-hydroxy-tetrahydrodipicolinate (HTPA). The protein is 4-hydroxy-tetrahydrodipicolinate synthase of Syntrophotalea carbinolica (strain DSM 2380 / NBRC 103641 / GraBd1) (Pelobacter carbinolicus).